Reading from the N-terminus, the 119-residue chain is Protein FAM24A-like (119 aa).

The N-terminal stretch at 1 to 40 (MYKPFDLRTIITIIIGCGILTAMFLLIGLVLCLYSKISKA) is a signal peptide.

It belongs to the FAM24 family.

The protein resides in the secreted. The polypeptide is Protein FAM24A-like (Mus musculus (Mouse)).